A 215-amino-acid polypeptide reads, in one-letter code: MKPLILGLAAVLALSACQVQKAPDFDYTSFKESKPASILVVPPLNESPDVNGTWGVLASTAAPLSEAGYYVFPAAVVEETFKQNGLTNAADIHAVRPEKLHQIFGNDAVLYITVTEYGTSYQILDSVTTVSAKARLVDSRNGKELWSGSASIREGSNNSNSGLLGALVSAVVNQIANSLTDRGYQVSKTAAYNLLSPYSHNGILKGPRFVEEQPK.

An N-terminal signal peptide occupies residues 1-16; that stretch reads MKPLILGLAAVLALSA. Cysteine 17 carries N-palmitoyl cysteine lipidation. Cysteine 17 carries the S-diacylglycerol cysteine lipid modification.

It is found in the cell membrane. This chain is Putative lipoprotein NMB1124/NMB1162, found in Neisseria meningitidis serogroup B (strain ATCC BAA-335 / MC58).